Here is a 1385-residue protein sequence, read N- to C-terminus: Coiled-coil domain-containing protein 7 (1385 aa).

Residues 299-330 are a coiled coil; sequence LDAEYKQMQCDFQLLSEEKLVLENELQKLKDK. Positions 329-364 are disordered; that stretch reads DKEKTKPTNNRTKKAVKTVKKKDKGKSEDSEKKMSP. Residues 339–352 are compositionally biased toward basic residues; the sequence is RTKKAVKTVKKKDK. Residues 353–364 show a composition bias toward basic and acidic residues; the sequence is GKSEDSEKKMSP. A coiled-coil region spans residues 374 to 411; it reads LDQVQKVARLEIENKVLQEQLKQALQEAEKAKHQLNYF. Disordered regions lie at residues 422 to 545, 572 to 752, and 809 to 834; these read GKTE…SKEV, TESK…EPNE, and TKKL…LKHQ. A compositionally biased stretch (polar residues) spans 425-436; that stretch reads ETTMQVGNSQTK. Composition is skewed to basic and acidic residues over residues 437–455 and 481–490; these read VKGE…RKSL and LIEKSSEKKR. Polar residues-rich tracts occupy residues 493–503, 511–528, and 536–545; these read PAISDLSQILK, LESS…YKSP, and LTTVSSSKEV. The segment covering 573–589 has biased composition (basic and acidic residues); it reads ESKKADVSEEQLQKMTE. Residues 654 to 664 are compositionally biased toward polar residues; that stretch reads RIQSETKNLKA. Basic and acidic residues-rich tracts occupy residues 665–676 and 685–697; these read TRNESFHSHNDV and QDTK…EVKK. A compositionally biased stretch (polar residues) spans 701–711; it reads FQDNQLSTHNE. A compositionally biased stretch (basic and acidic residues) spans 712–726; the sequence is VPNERLVVEHQESLS.

In terms of tissue distribution, expressed in epithelium of normal cervix and cervical cancer. Overexpressed in early and interim cervical cancer.

Its function is as follows. May play a role in tumorigenesis. This chain is Coiled-coil domain-containing protein 7 (CCDC7), found in Homo sapiens (Human).